Consider the following 199-residue polypeptide: NAD(P)H dehydrogenase (quinone) (199 aa).

In terms of domain architecture, Flavodoxin-like spans 4 to 190 (VLVLYYSAYG…EAAKYQGAHV (187 aa)). Residues 10-15 (SAYGHI) and 78-80 (TRF) each bind FMN. Tyrosine 12 is a binding site for NAD(+). Tryptophan 98 provides a ligand contact to substrate. FMN is bound by residues 113–119 (SSATQHG) and histidine 134.

Belongs to the WrbA family. FMN serves as cofactor.

The catalysed reaction is a quinone + NADH + H(+) = a quinol + NAD(+). It carries out the reaction a quinone + NADPH + H(+) = a quinol + NADP(+). This chain is NAD(P)H dehydrogenase (quinone), found in Rhizobium rhizogenes (strain K84 / ATCC BAA-868) (Agrobacterium radiobacter).